We begin with the raw amino-acid sequence, 702 residues long: Polyribonucleotide nucleotidyltransferase (702 aa).

Positions 485 and 491 each coordinate Mg(2+). In terms of domain architecture, KH spans 552 to 611 (PRITTLKINPEKIRDVIGKGGATIRALTEETGTTIELEDDGTVKIASANGEATKEAIRRI). Residues 621–689 (GTVYNGKVVR…RQGRVRLSMK (69 aa)) enclose the S1 motif domain.

The protein belongs to the polyribonucleotide nucleotidyltransferase family. As to quaternary structure, component of the RNA degradosome, which is a multiprotein complex involved in RNA processing and mRNA degradation. Mg(2+) serves as cofactor.

The protein resides in the cytoplasm. It catalyses the reaction RNA(n+1) + phosphate = RNA(n) + a ribonucleoside 5'-diphosphate. In terms of biological role, involved in mRNA degradation. Catalyzes the phosphorolysis of single-stranded polyribonucleotides processively in the 3'- to 5'-direction. In Shewanella woodyi (strain ATCC 51908 / MS32), this protein is Polyribonucleotide nucleotidyltransferase.